The sequence spans 166 residues: Interleukin-3 (166 aa).

The N-terminal stretch at 1-26 (MVLASSTTSIHTMLLLLLMLFHLGLQ) is a signal peptide. Asn-42 is a glycosylation site (N-linked (GlcNAc...) asparagine). Disulfide bonds link Cys-43–Cys-106 and Cys-105–Cys-166. Residue Asn-112 is glycosylated (N-linked (GlcNAc...) asparagine; partial). The tract at residues 145-166 (LTSRPPQPASGSVSPNRGTVEC) is disordered.

This sequence belongs to the IL-3 family. In terms of assembly, monomer. As to expression, activated T-cells, mast cells, natural killer cells.

The protein localises to the secreted. In terms of biological role, cytokine secreted predominantly by activated T-lymphocytes as well as mast cells and osteoblastic cells that controls the production and differentiation of hematopoietic progenitor cells into lineage-restricted cells. Also stimulates mature basophils, eosinophils, and monocytes to become functionally activated. In addition, plays an important role in neural cell proliferation and survival. Participates as well in bone homeostasis and inhibits osteoclast differentiation by preventing NF-kappa-B nuclear translocation and activation. Mechanistically, exerts its biological effects through a receptor composed of IL3RA subunit and a signal transducing subunit IL3RB. Receptor stimulation results in the rapid activation of JAK2 kinase activity leading to STAT5-mediated transcriptional program. Alternatively, contributes to cell survival under oxidative stress in non-hematopoietic systems by activating pathways mediated by PI3K/AKT and ERK. The protein is Interleukin-3 (Il3) of Mus musculus (Mouse).